The chain runs to 437 residues: Nuclear distribution protein PAC1 (437 aa).

Residues 64-94 (LSVIRLQRKVMDLETRLEAAEREASSTHKAN) are a coiled coil. 7 WD repeats span residues 114-153 (LHKQ…IETT), 156-217 (AHTR…ANVK), 221-260 (GHDH…CVRT), 263-301 (GHTD…GKMT), 304-356 (GHEH…LLIL), 358-397 (GHDN…RCIR), and 401-437 (AHGH…KVWQ). Residues 165 to 186 (DFSQPDTGASRDKSHDKPRADV) form a disordered region. A compositionally biased stretch (basic and acidic residues) spans 173–186 (ASRDKSHDKPRADV).

This sequence belongs to the WD repeat LIS1/nudF family. In terms of assembly, self-associates. Interacts with NDL1 and dynein.

The protein localises to the cytoplasm. It localises to the cytoskeleton. The protein resides in the spindle pole. In terms of biological role, positively regulates the activity of the minus-end directed microtubule motor protein dynein. Plays a central role in positioning the mitotic spindle at the bud neck during cell division. Targets cytoplasmic dynein to microtubule plus ends, thereby promoting dynein-mediated microtubule sliding along the bud cortex and consequently the movement of the mitotic spindle to the bud neck. In Yarrowia lipolytica (strain CLIB 122 / E 150) (Yeast), this protein is Nuclear distribution protein PAC1.